Here is a 302-residue protein sequence, read N- to C-terminus: Acidic endochitinase (302 aa).

The signal sequence occupies residues 1–30; that stretch reads MTNMTLRKHVIYFLFFISCSLSKPSDASRG. The 272-residue stretch at 31–302 folds into the GH18 domain; it reads GIAIYWGQNG…GYSSSILASV (272 aa). 2 disulfides stabilise this stretch: C49–C96 and C79–C86. Residue E156 is the Proton donor of the active site. Cysteines 188 and 217 form a disulfide.

It belongs to the glycosyl hydrolase 18 family. Chitinase class III subfamily.

The protein resides in the secreted. It is found in the extracellular space. The catalysed reaction is Random endo-hydrolysis of N-acetyl-beta-D-glucosaminide (1-&gt;4)-beta-linkages in chitin and chitodextrins.. This protein functions as a defense against chitin containing fungal pathogens. This chain is Acidic endochitinase (CHIB1), found in Arabidopsis thaliana (Mouse-ear cress).